The chain runs to 544 residues: Chaperonin GroEL (544 aa).

ATP-binding positions include 29–32, lysine 50, 86–90, glycine 414, 477–479, and aspartate 493; these read TMGP, DGTTT, and NAV.

This sequence belongs to the chaperonin (HSP60) family. In terms of assembly, forms a cylinder of 14 subunits composed of two heptameric rings stacked back-to-back. Interacts with the co-chaperonin GroES.

The protein resides in the cytoplasm. The enzyme catalyses ATP + H2O + a folded polypeptide = ADP + phosphate + an unfolded polypeptide.. Its function is as follows. Together with its co-chaperonin GroES, plays an essential role in assisting protein folding. The GroEL-GroES system forms a nano-cage that allows encapsulation of the non-native substrate proteins and provides a physical environment optimized to promote and accelerate protein folding. This is Chaperonin GroEL from Campylobacter curvus (strain 525.92).